A 426-amino-acid polypeptide reads, in one-letter code: Probable imidazolonepropionase (426 aa).

Residues Tyr-159 and His-192 each contribute to the 4-imidazolone-5-propanoate site. N-formimidoyl-L-glutamate is bound at residue Tyr-159. A Fe(3+)-binding site is contributed by His-260. His-260 lines the Zn(2+) pocket. 4-imidazolone-5-propanoate is bound at residue Glu-263. Position 334 (Asp-334) interacts with Fe(3+). Residue Asp-334 participates in Zn(2+) binding. Asn-336 is a binding site for N-formimidoyl-L-glutamate.

Belongs to the metallo-dependent hydrolases superfamily. HutI family. Zn(2+) is required as a cofactor. Fe(3+) serves as cofactor.

The catalysed reaction is 4-imidazolone-5-propanoate + H2O = N-formimidoyl-L-glutamate. The protein operates within amino-acid degradation; L-histidine degradation into L-glutamate; N-formimidoyl-L-glutamate from L-histidine: step 3/3. The protein is Probable imidazolonepropionase (AMDHD1) of Bos taurus (Bovine).